The chain runs to 148 residues: Large ribosomal subunit protein bL9 (148 aa).

Belongs to the bacterial ribosomal protein bL9 family.

Functionally, binds to the 23S rRNA. This Oceanobacillus iheyensis (strain DSM 14371 / CIP 107618 / JCM 11309 / KCTC 3954 / HTE831) protein is Large ribosomal subunit protein bL9.